A 151-amino-acid polypeptide reads, in one-letter code: Protein E6 (151 aa).

2 zinc fingers span residues cysteine 30–cysteine 66 and cysteine 103–cysteine 139. A PDZ-binding domain motif is present at residues threonine 149–valine 151.

Belongs to the papillomaviridae E6 protein family. In terms of assembly, forms homodimers. Interacts with ubiquitin-protein ligase UBE3A/E6-AP and thus forms a complex with human TP53. Interacts with human NFX1 and MAGI3. Interacts with human IRF3; this interaction inhibits the establishment of antiviral state. Interacts with human TYK2; this interaction inhibits JAK-STAT activation by interferon alpha. Interacts with host DLG1; this interaction leads to the proteasomal degradation of DLG1.

Its subcellular location is the host cytoplasm. The protein resides in the host nucleus. Plays a major role in the induction and maintenance of cellular transformation. Acts mainly as an oncoprotein by stimulating the destruction of many host cell key regulatory proteins. E6 associates with host UBE3A/E6-AP ubiquitin-protein ligase, and inactivates tumor suppressors TP53 and TP73 by targeting them to the 26S proteasome for degradation. In turn, DNA damage and chromosomal instabilities increase and lead to cell proliferation and cancer development. The complex E6/E6AP targets several other substrates to degradation via the proteasome including host DLG1 or NFX1, a repressor of human telomerase reverse transcriptase (hTERT). The resulting increased expression of hTERT prevents the shortening of telomere length leading to cell immortalization. Other cellular targets including BAK1, Fas-associated death domain-containing protein (FADD) and procaspase 8, are degraded by E6/E6AP causing inhibition of apoptosis. E6 also inhibits immune response by interacting with host IRF3 and TYK2. These interactions prevent IRF3 transcriptional activities and inhibit TYK2-mediated JAK-STAT activation by interferon alpha resulting in inhibition of the interferon signaling pathway. In Homo sapiens (Human), this protein is Protein E6.